The primary structure comprises 419 residues: O-methyltransferase gsfB (419 aa).

S-adenosyl-L-methionine is bound by residues 255–256 (GG), Asp278, 300–301 (DF), and Arg316. His320 (proton acceptor) is an active-site residue.

The protein belongs to the class I-like SAM-binding methyltransferase superfamily. Cation-independent O-methyltransferase family.

The catalysed reaction is 2-(2,4-dihydroxy-6-oxidobenzoyl)-5-hydroxy-3-methylbenzenolate + S-adenosyl-L-methionine = griseophenone D + S-adenosyl-L-homocysteine + H(+). The protein operates within secondary metabolite biosynthesis; terpenoid biosynthesis. Its function is as follows. O-methyltransferase; part of the gene cluster that mediates the biosynthesis of griseofulvin, an important antifungal drug that has been in use for a long time for treating dermatophyte infections. The first step of the pathway is the formation of the heptaketide backbone by gsfA which is initiated by priming with acetyl-CoA, followed by sequential condensations of 6 malonyl-CoA units. The resulting benzophenone can undergo a spontaneous dehydration to form norlichexanthone. However, the true precursor for the griseofulvin biosynthesis is not norlichexanthone, but the heptaketide benzophenone that is O-methylated at 3-OH by gsfB to produce griseophenone D which is further methylated at 9-OH by gsfC to yield griseophenone C. Griseophenone C is then substrate of halogenase gsfI which is responsible for the regio-specific chlorination at the C13 position to form griseophenone B. The cytochrome P450 gsfF catalyzes the coupling of orcinol and phloroglucinol rings in griseophenone B to form desmethyl-dehydrogriseofulvin A which is further methylated at 5-OH by gsfD to yield dehydrogriseofulvin. Finally, gsfE performs stereospecific reduction of enone 18 of dehydrogriseofulvin to afford the final product griseofulvin. The protein is O-methyltransferase gsfB of Penicillium aethiopicum.